The primary structure comprises 304 residues: L-xylo-3-hexulose reductase (304 aa).

NADP(+) is bound by residues isoleucine 19, aspartate 68, and asparagine 107. Active-site proton donor residues include serine 163 and serine 164. The NADP(+) site is built by tyrosine 177, lysine 181, and alanine 209. Tyrosine 177 functions as the Proton acceptor in the catalytic mechanism. Lysine 181 functions as the Lowers pKa of active site Tyr in the catalytic mechanism.

The protein belongs to the short-chain dehydrogenases/reductases (SDR) family.

It catalyses the reaction D-sorbitol + NADP(+) = L-xylo-3-hexulose + NADPH + H(+). It functions in the pathway carbohydrate degradation. Functionally, L-xylulose reductase involved in the catabolism of D-galactose through an oxidoreductive pathway. Catalyzes the NADPH-dependent reduction of L-xylo-3-hexulose. Is also active with D-ribulose and L-xylulose, and to a lesser extent with D-xylulose, D-fructose and L- and D-sorbose. In the reverse reaction, shows activity with D-sorbitol and D-mannitol, low activity with xylitol, but no activity with galactitol, ribitol, and L- and D-arabitol. This is L-xylo-3-hexulose reductase from Hypocrea jecorina (strain QM6a) (Trichoderma reesei).